The primary structure comprises 98 residues: NADH-ubiquinone oxidoreductase chain 4L (98 aa).

Helical transmembrane passes span 1 to 21 (MTSI…GVLV), 28 to 48 (STLL…ALLI), and 59 to 79 (APLI…ALLV).

It belongs to the complex I subunit 4L family. As to quaternary structure, core subunit of respiratory chain NADH dehydrogenase (Complex I) which is composed of 45 different subunits.

Its subcellular location is the mitochondrion inner membrane. The enzyme catalyses a ubiquinone + NADH + 5 H(+)(in) = a ubiquinol + NAD(+) + 4 H(+)(out). Its function is as follows. Core subunit of the mitochondrial membrane respiratory chain NADH dehydrogenase (Complex I) which catalyzes electron transfer from NADH through the respiratory chain, using ubiquinone as an electron acceptor. Part of the enzyme membrane arm which is embedded in the lipid bilayer and involved in proton translocation. The sequence is that of NADH-ubiquinone oxidoreductase chain 4L (MT-ND4L) from Dactylopsila trivirgata (Striped possum).